A 362-amino-acid chain; its full sequence is Cobalt-precorrin-5B C(1)-methyltransferase (362 aa).

Belongs to the CbiD family.

It carries out the reaction Co-precorrin-5B + S-adenosyl-L-methionine = Co-precorrin-6A + S-adenosyl-L-homocysteine. The protein operates within cofactor biosynthesis; adenosylcobalamin biosynthesis; cob(II)yrinate a,c-diamide from sirohydrochlorin (anaerobic route): step 6/10. Its function is as follows. Catalyzes the methylation of C-1 in cobalt-precorrin-5B to form cobalt-precorrin-6A. The polypeptide is Cobalt-precorrin-5B C(1)-methyltransferase (Burkholderia cenocepacia (strain HI2424)).